Here is a 529-residue protein sequence, read N- to C-terminus: Peptide chain release factor 3 (529 aa).

One can recognise a tr-type G domain in the interval 10–278 (ARRRTFAIIS…NFVDLAPAPR (269 aa)). GTP is bound by residues 19 to 26 (SHPDAGKT), 87 to 91 (DTPGH), and 141 to 144 (NKLD).

It belongs to the TRAFAC class translation factor GTPase superfamily. Classic translation factor GTPase family. PrfC subfamily.

It localises to the cytoplasm. Functionally, increases the formation of ribosomal termination complexes and stimulates activities of RF-1 and RF-2. It binds guanine nucleotides and has strong preference for UGA stop codons. It may interact directly with the ribosome. The stimulation of RF-1 and RF-2 is significantly reduced by GTP and GDP, but not by GMP. The polypeptide is Peptide chain release factor 3 (Nitratidesulfovibrio vulgaris (strain ATCC 29579 / DSM 644 / CCUG 34227 / NCIMB 8303 / VKM B-1760 / Hildenborough) (Desulfovibrio vulgaris)).